The chain runs to 105 residues: Large ribosomal subunit protein uL24 (105 aa).

Belongs to the universal ribosomal protein uL24 family. Part of the 50S ribosomal subunit.

In terms of biological role, one of two assembly initiator proteins, it binds directly to the 5'-end of the 23S rRNA, where it nucleates assembly of the 50S subunit. Its function is as follows. One of the proteins that surrounds the polypeptide exit tunnel on the outside of the subunit. The protein is Large ribosomal subunit protein uL24 of Vibrio vulnificus (strain YJ016).